The following is a 350-amino-acid chain: Methionine import ATP-binding protein MetN (350 aa).

Residues 2-242 form the ABC transporter domain; that stretch reads IELKGISQHF…PRHDVTRALI (241 aa). ATP is bound at residue 39 to 46; that stretch reads GRSGAGKS.

The protein belongs to the ABC transporter superfamily. Methionine importer (TC 3.A.1.24) family. In terms of assembly, the complex is composed of two ATP-binding proteins (MetN), two transmembrane proteins (MetI) and a solute-binding protein (MetQ).

Its subcellular location is the cell inner membrane. It catalyses the reaction L-methionine(out) + ATP + H2O = L-methionine(in) + ADP + phosphate + H(+). The catalysed reaction is D-methionine(out) + ATP + H2O = D-methionine(in) + ADP + phosphate + H(+). Its function is as follows. Part of the ABC transporter complex MetNIQ involved in methionine import. Responsible for energy coupling to the transport system. This is Methionine import ATP-binding protein MetN from Ralstonia nicotianae (strain ATCC BAA-1114 / GMI1000) (Ralstonia solanacearum).